A 303-amino-acid chain; its full sequence is UDP-3-O-acyl-N-acetylglucosamine deacetylase (303 aa).

Residues His-78, His-237, and Asp-241 each contribute to the Zn(2+) site. His-264 (proton donor) is an active-site residue.

It belongs to the LpxC family. Requires Zn(2+) as cofactor.

The catalysed reaction is a UDP-3-O-[(3R)-3-hydroxyacyl]-N-acetyl-alpha-D-glucosamine + H2O = a UDP-3-O-[(3R)-3-hydroxyacyl]-alpha-D-glucosamine + acetate. It functions in the pathway glycolipid biosynthesis; lipid IV(A) biosynthesis; lipid IV(A) from (3R)-3-hydroxytetradecanoyl-[acyl-carrier-protein] and UDP-N-acetyl-alpha-D-glucosamine: step 2/6. Catalyzes the hydrolysis of UDP-3-O-myristoyl-N-acetylglucosamine to form UDP-3-O-myristoylglucosamine and acetate, the committed step in lipid A biosynthesis. This Pseudomonas putida (strain GB-1) protein is UDP-3-O-acyl-N-acetylglucosamine deacetylase.